Consider the following 381-residue polypeptide: Creatine kinase B-type (381 aa).

Serine 4 carries the phosphoserine modification. The Phosphagen kinase N-terminal domain maps to 11 to 98; sequence KLRFPAEDEF…FDPIIEDRHG (88 aa). Phosphothreonine is present on threonine 35. Lysine 45 participates in a covalent cross-link: Glycyl lysine isopeptide (Lys-Gly) (interchain with G-Cter in ubiquitin). Valine 72 provides a ligand contact to creatine. Basic and acidic residues predominate over residues 96–110; it reads RHGGYKPSDEHKTDL. The segment at 96–123 is disordered; sequence RHGGYKPSDEHKTDLNPDNLQGGDDLDP. Glycyl lysine isopeptide (Lys-Gly) (interchain with G-Cter in ubiquitin) cross-links involve residues lysine 101 and lysine 107. Position 125 is a phosphotyrosine (tyrosine 125). Residues 125–367 form the Phosphagen kinase C-terminal domain; sequence YVLSSRVRTG…KLLIEMEQRL (243 aa). Residues 128 to 132, arginine 130, arginine 132, and histidine 191 contribute to the ATP site; that span reads SSRVR. An internal MTS-like signal region spans residues 130 to 138; the sequence is RVRTGRSIR. Phosphoserine is present on serine 199. Glutamate 232 is a binding site for creatine. ATP is bound at residue arginine 236. Tyrosine 269 carries the 3'-nitrotyrosine modification. Creatine is bound at residue serine 285. Residues arginine 292, 292-296, arginine 320, 320-325, and aspartate 335 each bind ATP; these read RAGVH and RGTGGV. At threonine 322 the chain carries Phosphothreonine. Residue lysine 381 forms a Glycyl lysine isopeptide (Lys-Gly) (interchain with G-Cter in ubiquitin) linkage.

This sequence belongs to the ATP:guanido phosphotransferase family. Dimer of identical or non-identical chains, which can be either B (brain type) or M (muscle type). With MM being the major form in skeletal muscle and myocardium, MB existing in myocardium, and BB existing in many tissues, especially brain. Interacts with SLC12A6 (via C-terminus); the interaction may be required for SLC12A6 potassium-chloride cotransport activity. In terms of processing, ubiquitinated by the ECS(ASB9) complex, leading to its degradation by the proteasome.

The protein resides in the cytoplasm. Its subcellular location is the cytosol. It is found in the mitochondrion. The protein localises to the cell membrane. It catalyses the reaction creatine + ATP = N-phosphocreatine + ADP + H(+). In terms of biological role, reversibly catalyzes the transfer of phosphate between ATP and various phosphogens (e.g. creatine phosphate). Creatine kinase isoenzymes play a central role in energy transduction in tissues with large, fluctuating energy demands, such as skeletal muscle, heart, brain and spermatozoa. Acts as a key regulator of adaptive thermogenesis as part of the futile creatine cycle: localizes to the mitochondria of thermogenic fat cells and acts by mediating phosphorylation of creatine to initiate a futile cycle of creatine phosphorylation and dephosphorylation. During the futile creatine cycle, creatine and N-phosphocreatine are in a futile cycle, which dissipates the high energy charge of N-phosphocreatine as heat without performing any mechanical or chemical work. This Sus scrofa (Pig) protein is Creatine kinase B-type (CKB).